The following is a 572-amino-acid chain: Formate--tetrahydrofolate ligase (572 aa).

81–88 (TPAGEGKT) is an ATP binding site.

The protein belongs to the formate--tetrahydrofolate ligase family.

It carries out the reaction (6S)-5,6,7,8-tetrahydrofolate + formate + ATP = (6R)-10-formyltetrahydrofolate + ADP + phosphate. Its pathway is one-carbon metabolism; tetrahydrofolate interconversion. This is Formate--tetrahydrofolate ligase from Granulibacter bethesdensis (strain ATCC BAA-1260 / CGDNIH1).